A 307-amino-acid polypeptide reads, in one-letter code: Acetyl-coenzyme A carboxylase carboxyl transferase subunit beta (307 aa).

The CoA carboxyltransferase N-terminal domain occupies 25–294 (VWTKCTSCEQ…PLVVPIEQPK (270 aa)). Residues C29, C32, C48, and C51 each coordinate Zn(2+). A C4-type zinc finger spans residues 29–51 (CTSCEQVLYHADLERNLEVCPKC).

It belongs to the AccD/PCCB family. As to quaternary structure, acetyl-CoA carboxylase is a heterohexamer composed of biotin carboxyl carrier protein (AccB), biotin carboxylase (AccC) and two subunits each of ACCase subunit alpha (AccA) and ACCase subunit beta (AccD). Requires Zn(2+) as cofactor.

Its subcellular location is the cytoplasm. The catalysed reaction is N(6)-carboxybiotinyl-L-lysyl-[protein] + acetyl-CoA = N(6)-biotinyl-L-lysyl-[protein] + malonyl-CoA. It functions in the pathway lipid metabolism; malonyl-CoA biosynthesis; malonyl-CoA from acetyl-CoA: step 1/1. Functionally, component of the acetyl coenzyme A carboxylase (ACC) complex. Biotin carboxylase (BC) catalyzes the carboxylation of biotin on its carrier protein (BCCP) and then the CO(2) group is transferred by the transcarboxylase to acetyl-CoA to form malonyl-CoA. The chain is Acetyl-coenzyme A carboxylase carboxyl transferase subunit beta from Photobacterium profundum (strain SS9).